The sequence spans 125 residues: Holo-[acyl-carrier-protein] synthase (125 aa).

2 residues coordinate Mg(2+): Asp8 and Glu57.

Belongs to the P-Pant transferase superfamily. AcpS family. Requires Mg(2+) as cofactor.

It localises to the cytoplasm. The enzyme catalyses apo-[ACP] + CoA = holo-[ACP] + adenosine 3',5'-bisphosphate + H(+). Functionally, transfers the 4'-phosphopantetheine moiety from coenzyme A to a Ser of acyl-carrier-protein. This Nitrosomonas europaea (strain ATCC 19718 / CIP 103999 / KCTC 2705 / NBRC 14298) protein is Holo-[acyl-carrier-protein] synthase.